A 601-amino-acid polypeptide reads, in one-letter code: Polypeptide N-acetylgalactosaminyltransferase 11 (601 aa).

Topologically, residues 1–7 are cytoplasmic; it reads MGSAALR. The chain crosses the membrane as a helical; Signal-anchor for type II membrane protein span at residues 8–28; it reads CFCYGCLFTSVTWTLLLFIYF. N-linked (GlcNAc...) asparagine glycans are attached at residues Asn-29 and Asn-202. Over 29 to 601 the chain is Lumenal; it reads NFSEESQGFR…SPSQQWHLEN (573 aa). The tract at residues 143 to 254 is catalytic subdomain A; it reads LPMASIVICF…EMWLQPLLAP (112 aa). The catalytic subdomain B stretch occupies residues 312 to 374; that stretch reads PFRSPTMAGG…PCSRVGHIFR (63 aa). In terms of domain architecture, Ricin B-type lectin spans 469-600; it reads RPKILQRGRL…GSPSQQWHLE (132 aa). Cysteines 486 and 505 form a disulfide. Asn-508 carries N-linked (GlcNAc...) asparagine glycosylation. Disulfide bonds link Cys-529–Cys-546 and Cys-571–Cys-589.

Belongs to the glycosyltransferase 2 family. GalNAc-T subfamily. In terms of assembly, interacts with notch1. Mn(2+) serves as cofactor. Requires Ca(2+) as cofactor.

It localises to the golgi apparatus membrane. The catalysed reaction is L-seryl-[protein] + UDP-N-acetyl-alpha-D-galactosamine = a 3-O-[N-acetyl-alpha-D-galactosaminyl]-L-seryl-[protein] + UDP + H(+). It catalyses the reaction L-threonyl-[protein] + UDP-N-acetyl-alpha-D-galactosamine = a 3-O-[N-acetyl-alpha-D-galactosaminyl]-L-threonyl-[protein] + UDP + H(+). It functions in the pathway protein modification; protein glycosylation. Its function is as follows. Polypeptide N-acetylgalactosaminyltransferase that catalyzes the initiation of protein O-linked glycosylation and is involved in left/right asymmetry by mediating O-glycosylation of NOTCH1. O-glycosylation of NOTCH1 promotes activation of NOTCH1, modulating the balance between motile and immotile (sensory) cilia at the left-right organiser (LRO). Polypeptide N-acetylgalactosaminyltransferases catalyze the transfer of an N-acetyl-D-galactosamine residue to a serine or threonine residue on the protein receptor. The sequence is that of Polypeptide N-acetylgalactosaminyltransferase 11 (galnt11) from Xenopus tropicalis (Western clawed frog).